The chain runs to 579 residues: Folliculin (579 aa).

Positions 32–52 (GASCGDSIGQGEQAEDEEMGI) are disordered. Positions 86-242 (RSLAAGHPGY…RNGNAARSLT (157 aa)) constitute a uDENN FLCN/SMCR8-type domain. The 155-residue stretch at 337-491 (NMVQRRMGVF…ILNKIEAALS (155 aa)) folds into the cDENN FLCN/SMCR8-type domain. One can recognise a dDENN FLCN/SMCR8-type domain in the interval 493 to 558 (ENLSMDVVDQ…LLKFWMTGLS (66 aa)).

The protein belongs to the folliculin family. In terms of assembly, component of the lysosomal folliculin complex (LFC).

The protein localises to the lysosome membrane. It is found in the cytoplasm. The protein resides in the cytosol. It localises to the cell projection. Its subcellular location is the cilium. The protein localises to the cytoskeleton. It is found in the microtubule organizing center. The protein resides in the centrosome. It localises to the spindle. Its subcellular location is the nucleus. Its activity is regulated as follows. GTPase-activating activity is inhibited in the folliculin complex (LFC), which stabilizes the GDP-bound state of RagA/RRAGA (or RagB/RRAGB), because Arg-164 is located far from the RagC/RRAGC or RagD/RRAGD nucleotide pocket. Disassembly of the LFC complex upon amino acid restimulation liberates the GTPase-activating activity. In terms of biological role, multi-functional protein, involved in both the cellular response to amino acid availability and in the regulation of glycolysis. GTPase-activating protein that plays a key role in the cellular response to amino acid availability through regulation of the non-canonical mTORC1 signaling cascade controlling the MiT/TFE factors tfeb and tfe3. Activates mTORC1 by acting as a GTPase-activating protein: specifically stimulates GTP hydrolysis by RagC/RRAGC or RagD/RRAGD, promoting the conversion to the GDP-bound state of RagC/RRAGC or RagD/RRAGD, and thereby activating the kinase activity of mTORC1. The GTPase-activating activity is inhibited during starvation and activated in presence of nutrients. Acts as a key component for non-canonical mTORC1-dependent control of the MiT/TFE factors tfeb and tfe3, while it is not involved in mTORC1-dependent phosphorylation of canonical RPS6KB1/S6K1 and EIF4EBP1/4E-BP1. In low-amino acid conditions, the lysosomal folliculin complex (LFC) is formed on the membrane of lysosomes, which inhibits the GTPase-activating activity of flcn, inactivates mTORC1 and maximizes nuclear translocation of tfeb and tfe3. Upon amino acid restimulation, RagA/RRAGA (or RagB/RRAGB) nucleotide exchange promotes disassembly of the LFC complex and liberates the GTPase-activating activity of flcn, leading to activation of mTORC1 and subsequent cytoplasmic retention of tfeb and tfe3. Required for the exit of hematopoietic stem cell from pluripotency by promoting mTOR-dependent cytoplasmic retention of tfe3, thereby increasing Wnt signaling. Acts as an inhibitor of browning of adipose tissue by regulating mTOR-dependent cytoplasmic retention of tfe3. In response to flow stress, regulates STK11/LKB1 accumulation and mTORC1 activation through primary cilia. Required for starvation-induced perinuclear clustering of lysosomes by promoting association of rilp with its effector rab34. Involved in the control of embryonic stem cells differentiation; together with lamtor1 it is necessary to recruit and activate RagC/RRAGC and RagD/RRAGD at the lysosomes, and to induce exit of embryonic stem cells from pluripotency via non-canonical, mTOR-independent tfe3 inactivation. Regulates glycolysis by binding to lactate dehydrogenase ldha, acting as an uncompetitive inhibitor. This chain is Folliculin, found in Xenopus tropicalis (Western clawed frog).